We begin with the raw amino-acid sequence, 255 residues long: MVMSSYMVNSKYVDPKFPPCEEYLQGGYLGEQGADYYGGGAQGADFQPPGLYPRPDFGEQPFGGSGPGPGSALPARGHGQEPGGPGGHYAAPGEPCPAPPAPPPAPLPGAPACSQSDPKQPPPGTALKQPAVVYPWMKKVHVNSVNPNYTGGEPKRSRTAYTRQQVLELEKEFHFNRYLTRRRRIEIAHTLCLSERQIKIWFQNRRMKWKKDHKLPNTKGRSSSSSSSSSCSSSVAPSQHLQPMAKDHHTDLTTL.

The segment at 31–128 (EQGADYYGGG…KQPPPGTALK (98 aa)) is disordered. The segment covering 94–109 (EPCPAPPAPPPAPLPG) has biased composition (pro residues). Positions 133–138 (VYPWMK) match the Antp-type hexapeptide motif. A DNA-binding region (homeobox) is located at residues 154–213 (PKRSRTAYTRQQVLELEKEFHFNRYLTRRRRIEIAHTLCLSERQIKIWFQNRRMKWKKDH). The disordered stretch occupies residues 212-255 (DHKLPNTKGRSSSSSSSSSCSSSVAPSQHLQPMAKDHHTDLTTL). The segment covering 222-234 (SSSSSSSSSCSSS) has biased composition (low complexity). Residues 245-255 (AKDHHTDLTTL) show a composition bias toward basic and acidic residues.

This sequence belongs to the Antp homeobox family. Deformed subfamily. In terms of assembly, forms a DNA-binding heterodimer with transcription factor PBX1.

The protein localises to the nucleus. Functionally, sequence-specific transcription factor which is part of a developmental regulatory system that provides cells with specific positional identities on the anterior-posterior axis. The chain is Homeobox protein Hox-D4 (HOXD4) from Gorilla gorilla gorilla (Western lowland gorilla).